The primary structure comprises 402 residues: Olfactomedin-like protein 1 (402 aa).

A signal peptide spans 1 to 28; that stretch reads MMVALRGASALLVLFLAAFLPPPQCTQD. Residue asparagine 66 is glycosylated (N-linked (GlcNAc...) asparagine). A coiled-coil region spans residues 79–133; that stretch reads SEYKSAVGNLALRVERAQREIDYIQYLREADECIESEDKTLAEMLLQEAEEEKKI. Residues asparagine 138 and asparagine 183 are each glycosylated (N-linked (GlcNAc...) asparagine). Residues 140–397 form the Olfactomedin-like domain; it reads SCDNMLMGIK…QIIYKLQTKR (258 aa). Residues cysteine 141 and cysteine 324 are joined by a disulfide bond.

In terms of processing, highly N-glycosylated. Mainly expressed in the small intestine, liver, lung and heart.

Its subcellular location is the secreted. In Homo sapiens (Human), this protein is Olfactomedin-like protein 1 (OLFML1).